A 699-amino-acid chain; its full sequence is PTS system glucose-specific EIICBA component (699 aa).

Positions 3-424 (KALFGVLQKI…FNLKTPGRED (422 aa)) constitute a PTS EIIC type-1 domain. A run of 11 helical transmembrane segments spans residues 16–36 (LMLPVAILPAAGILLAIGNAM), 66–86 (IVFDNLPLLFAVGVAIGLANG), 89–109 (VAGIAAIIGYLVMNVSMSAVL), 139–159 (IPTLATGVFGGIIVGVLAALL), 180–200 (FVPIVTSISALILGLIMLVIW), 233–253 (LIPFGLHHIFYSPFWYEFFSY), 283–303 (FMTGKYPFMMFGLPAAALAIY), 313–333 (LVAGIMGSAALTSFLTGITEP), 338–358 (FLFVAPVLFAIHCLFAGLSFM), 365–385 (VKIGMTFSGGLIDYFLFGILP), and 388–408 (TAWWLVIPVGLGLAVIYYFGF). The 82-residue stretch at 439–520 (GDLPYEILQA…QDIIAGRKPR (82 aa)) folds into the PTS EIIB type-1 domain. Cysteine 461 serves as the catalytic Phosphocysteine intermediate; for EIIB activity. Positions 568–672 (DQVFSGKMMG…SLMTPIVFTN (105 aa)) constitute a PTS EIIA type-1 domain. Histidine 620 (tele-phosphohistidine intermediate; for EIIA activity) is an active-site residue.

The protein resides in the cell membrane. The catalysed reaction is N(pros)-phospho-L-histidyl-[protein] + D-glucose(out) = D-glucose 6-phosphate(in) + L-histidyl-[protein]. It catalyses the reaction D-glucosamine(out) + N(pros)-phospho-L-histidyl-[protein] = D-glucosamine 6-phosphate(in) + L-histidyl-[protein]. In terms of biological role, the phosphoenolpyruvate-dependent sugar phosphotransferase system (sugar PTS), a major carbohydrate active transport system, catalyzes the phosphorylation of incoming sugar substrates concomitantly with their translocation across the cell membrane. This system is involved in glucose transport. The system can also transport glucosamine. Its function is as follows. In addition, plays an important role in the phosphorylation of EIIA-deficient PTS transporters. The EIIA domain can transfer a phosphoryl group to EIIA-deficient PTS transporters, enabling growth with maltose, N-acetylglucosamine, sucrose or trehalose as the sole carbon source. In Bacillus subtilis (strain 168), this protein is PTS system glucose-specific EIICBA component (ptsG).